A 953-amino-acid polypeptide reads, in one-letter code: ABC transporter A family member 11 (953 aa).

Transmembrane regions (helical) follow at residues 33 to 53 (CLQI…EEAM), 230 to 250 (GPVF…GALV), 277 to 297 (TWEG…GMIF), 307 to 327 (FVLV…LAFA), 341 to 361 (VGFL…TGFP), and 417 to 437 (VISI…WFVL). Residues 519–764 (VQIHGLAKTY…FGTGFVATVS (246 aa)) enclose the ABC transporter domain. 565 to 572 (GPNGAGKT) contributes to the ATP binding site.

The protein belongs to the ABC transporter superfamily. ABCA family. CPR flippase (TC 3.A.1.211) subfamily.

The protein resides in the membrane. This chain is ABC transporter A family member 11 (ABCA11), found in Arabidopsis thaliana (Mouse-ear cress).